We begin with the raw amino-acid sequence, 535 residues long: Beta-amylase (535 aa).

Residues D51, H91, and D99 each contribute to the substrate site. E184 (proton donor) is an active-site residue. Substrate is bound by residues K293, H298, and T340. E378 serves as the catalytic Proton acceptor. Residues 379–380 and R418 contribute to the substrate site; that span reads NA. 3 consecutive repeat copies span residues 489–499, 500–510, and 511–521. Positions 489 to 532 are 4 X 11 AA tandem repeats; it reads GPTGGMGGQAEGPTCGMGGQVKGPTGGMGGQAEDPTSGIGGELP. The tract at residues 513-535 is disordered; sequence TGGMGGQAEDPTSGIGGELPATM. A 4; approximate repeat occupies 522 to 532; sequence DPTSGIGGELP.

The protein belongs to the glycosyl hydrolase 14 family. As to quaternary structure, monomer.

The enzyme catalyses Hydrolysis of (1-&gt;4)-alpha-D-glucosidic linkages in polysaccharides so as to remove successive maltose units from the non-reducing ends of the chains.. The protein is Beta-amylase (BMY1) of Hordeum vulgare (Barley).